Consider the following 840-residue polypeptide: Intracellular phospholipase A1 (840 aa).

Disordered regions lie at residues Met1 to Lys142 and Lys666 to Ala718. Basic and acidic residues predominate over residues Gly26–Met39. Residues Ser97–Ser111 are compositionally biased toward low complexity. Residues Leu564–Cys827 enclose the DDHD domain. The span at Asn668–Gly680 shows a compositional bias: basic and acidic residues. Over residues Asp681 to Glu694 the composition is skewed to acidic residues.

It belongs to the PA-PLA1 family.

The catalysed reaction is 1,2-dihexadecanoyl-sn-glycero-3-phospho-(1D-myo-inositol) + H2O = 2-hexadecanoyl-sn-glycero-3-phospho-(1D-myo-inositol) + hexadecanoate + H(+). The enzyme catalyses a 1,2-diacyl-sn-glycero-3-phospho-L-serine + H2O = a 2-acyl-sn-glycero-3-phospho-L-serine + a fatty acid + H(+). It catalyses the reaction 1-hexadecanoyl-2-(9Z-octadecenoyl)-sn-glycero-3-phospho-L-serine + H2O = 2-(9Z-octadecenoyl)-sn-glycero-3-phospho-L-serine + hexadecanoate + H(+). It carries out the reaction 1,2-di-(9Z-octadecenoyl)-sn-glycero-3-phosphocholine + H2O = (9Z-octadecenoyl)-sn-glycero-3-phosphocholine + (9Z)-octadecenoate + H(+). The catalysed reaction is a 1,2-diacyl-sn-glycero-3-phosphocholine + H2O = a 1-acyl-sn-glycero-3-phosphocholine + a fatty acid + H(+). The enzyme catalyses 1,2-dihexadecanoyl-sn-glycero-3-phosphocholine + H2O = 1-hexadecanoyl-sn-glycero-3-phosphocholine + hexadecanoate + H(+). Its activity is regulated as follows. Inhibited by E-6-bromomethylene-3-1-naphthalenyl-2H-tetrahydropyran-2-one (BEL) in vitro. Functionally, hydrolyzes the ester bond at the sn-1 position of glycerophospholipids and produces 2-acyl lysophospholipids, being phosphatidylinositol (PI) its major substrate. PI is a versatile lipid that not only serves as a structural component of cellular membranes, but also plays important roles in signal transduction through distinct phosphorylated derivatives of the inositol head group. Catalyzes the hydrolysis of phosphatidylcholine at sn-2 position in vitro. Regulates asymmetric division, an important property of stem cells in C.elegans, by controlling the subcellular localizations of beta-catenin. The protein is Intracellular phospholipase A1 of Caenorhabditis elegans.